Here is a 523-residue protein sequence, read N- to C-terminus: Probable E3 ubiquitin-protein ligase ZFP1 (523 aa).

Residues 18–28 (EQGHSHIHSES) are compositionally biased toward basic and acidic residues. The segment at 18-43 (EQGHSHIHSESFNRTGNDSSDQGAQH) is disordered. Residues 29-40 (FNRTGNDSSDQG) are compositionally biased toward polar residues. An RING-type; atypical zinc finger spans residues 471–512 (CIICQEEYQVKECIGTLDCGHRYHEDCIKQWLMVKNLCPICK).

It belongs to the RING-type zinc finger family. As to quaternary structure, interacts with DJA6.

The enzyme catalyses S-ubiquitinyl-[E2 ubiquitin-conjugating enzyme]-L-cysteine + [acceptor protein]-L-lysine = [E2 ubiquitin-conjugating enzyme]-L-cysteine + N(6)-ubiquitinyl-[acceptor protein]-L-lysine.. Its pathway is protein modification; protein ubiquitination. Functionally, probable E3 ubiquitin-protein ligase. This chain is Probable E3 ubiquitin-protein ligase ZFP1, found in Oryza sativa subsp. japonica (Rice).